We begin with the raw amino-acid sequence, 91 residues long: Glycophorin-B (91 aa).

The first 19 residues, 1–19 (MYGKIIFVLLLSEIVSISA), serve as a signal peptide directing secretion. The Extracellular portion of the chain corresponds to 20 to 59 (LSTTEVAMHTSTSSSVTKSYISSQTNGETGQLVHRFTVPA). O-linked (GalNAc...) threonine glycosylation is present at Thr-36. Ser-38 carries O-linked (GalNAc...) serine glycosylation. A helical transmembrane segment spans residues 60 to 81 (PVVIILIILCVMAGIIGTILLI). The Cytoplasmic segment spans residues 82 to 91 (SYSIRRLIKA).

Belongs to the glycophorin-A family. As to quaternary structure, component of the ankyrin-1 complex in the erythrocyte, composed of ANK1, RHCE, RHAG, SLC4A1, EPB42, GYPA, GYPB and AQP1. Interacts (via the N-terminal) with RHAG; this interaction bridges the (RHAG)2(RHCE) heterotrimer with the SLC4A1 Band 3 I dimer complexed with GYPA. In terms of processing, the N-terminal extracellular domain is heavily glycosylated on serine and threonine residues.

The protein localises to the cell membrane. Component of the ankyrin-1 complex, a multiprotein complex involved in the stability and shape of the erythrocyte membrane. The chain is Glycophorin-B from Homo sapiens (Human).